Consider the following 140-residue polypeptide: Phosphoribosyl-AMP cyclohydrolase (140 aa).

Asp78 is a Mg(2+) binding site. Cys79 provides a ligand contact to Zn(2+). Mg(2+)-binding residues include Asp80 and Asp82. Residues Cys96 and Cys103 each contribute to the Zn(2+) site.

The protein belongs to the PRA-CH family. As to quaternary structure, homodimer. Requires Mg(2+) as cofactor. Zn(2+) serves as cofactor.

It localises to the cytoplasm. It carries out the reaction 1-(5-phospho-beta-D-ribosyl)-5'-AMP + H2O = 1-(5-phospho-beta-D-ribosyl)-5-[(5-phospho-beta-D-ribosylamino)methylideneamino]imidazole-4-carboxamide. It participates in amino-acid biosynthesis; L-histidine biosynthesis; L-histidine from 5-phospho-alpha-D-ribose 1-diphosphate: step 3/9. Its function is as follows. Catalyzes the hydrolysis of the adenine ring of phosphoribosyl-AMP. The chain is Phosphoribosyl-AMP cyclohydrolase from Ralstonia pickettii (strain 12J).